We begin with the raw amino-acid sequence, 122 residues long: Large ribosomal subunit protein uL14c (122 aa).

Belongs to the universal ribosomal protein uL14 family. In terms of assembly, part of the 50S ribosomal subunit.

It localises to the plastid. It is found in the chloroplast. Its function is as follows. Binds to 23S rRNA. The protein is Large ribosomal subunit protein uL14c of Guizotia abyssinica (Niger).